We begin with the raw amino-acid sequence, 155 residues long: Ribosomal RNA large subunit methyltransferase H (155 aa).

Residues I71, G103, and F122 to W127 contribute to the S-adenosyl-L-methionine site.

This sequence belongs to the RNA methyltransferase RlmH family. In terms of assembly, homodimer.

It is found in the cytoplasm. It carries out the reaction pseudouridine(1915) in 23S rRNA + S-adenosyl-L-methionine = N(3)-methylpseudouridine(1915) in 23S rRNA + S-adenosyl-L-homocysteine + H(+). Functionally, specifically methylates the pseudouridine at position 1915 (m3Psi1915) in 23S rRNA. The chain is Ribosomal RNA large subunit methyltransferase H from Cereibacter sphaeroides (strain ATCC 17025 / ATH 2.4.3) (Rhodobacter sphaeroides).